The sequence spans 672 residues: Acetoacetyl-CoA synthetase (672 aa).

It belongs to the ATP-dependent AMP-binding enzyme family.

Its subcellular location is the cytoplasm. It localises to the cytosol. It catalyses the reaction acetoacetate + ATP + CoA = acetoacetyl-CoA + AMP + diphosphate. Its function is as follows. Converts acetoacetate to acetoacetyl-CoA in the cytosol. Ketone body-utilizing enzyme, responsible for the synthesis of cholesterol and fatty acids. In Mus musculus (Mouse), this protein is Acetoacetyl-CoA synthetase (Aacs).